The chain runs to 219 residues: MNRLFGKAKPKAPPPSLTDCIGTVDSRAESIDKKISRLDAELVKYKDQIKKMREGPAKNMVKQKALRVLKQKRMYEQQRDNLAQQSFNMEQANYTIQSLKDTKTTVDAMKLGVKEMKKAYKQVKIDQIEDLQDQLEDMMEDANEIQEALSRSYGTPELDEDDLEAELDALGDELLADEDSSYLDEAASAPAIPEGVPTDTKNKDGVLVDEFGLPQIPAS.

Positions 1 to 10 are enriched in basic residues; it reads MNRLFGKAKP. The disordered stretch occupies residues 1–21; it reads MNRLFGKAKPKAPPPSLTDCI. Residue lysine 7 is the site of (Microbial infection) N6-stearoyl lysine attachment. Residues 26-179 adopt a coiled-coil conformation; sequence SRAESIDKKI…LGDELLADED (154 aa). Serine 86 is modified (phosphoserine). The interval 121-158 is interaction with VTA1; that stretch reads KQVKIDQIEDLQDQLEDMMEDANEIQEALSRSYGTPEL. The tract at residues 188 to 219 is disordered; sequence SAPAIPEGVPTDTKNKDGVLVDEFGLPQIPAS.

Belongs to the SNF7 family. As to quaternary structure, probable peripherally associated component of the endosomal sorting required for transport complex III (ESCRT-III). ESCRT-III components are thought to multimerize to form a flat lattice on the perimeter membrane of the endosome. Several assembly forms of ESCRT-III may exist that interact and act sequentially. Interacts with VTA1; the interaction involves soluble CHMP5. Interacts with CHMP2A. Interacts with NOD2. Interacts with BROX. (Microbial infection) Stearoylated By S.flexneri N-epsilon-fatty acyltransferase IcsB, promoting S.flexneri evasion of autophagy. In terms of processing, ISGylated. Isgylation inhibits its interaction with VTA1.

It is found in the cytoplasm. The protein localises to the cytosol. Its subcellular location is the endosome membrane. The protein resides in the midbody. Its function is as follows. Probable peripherally associated component of the endosomal sorting required for transport complex III (ESCRT-III) which is involved in multivesicular bodies (MVBs) formation and sorting of endosomal cargo proteins into MVBs. MVBs contain intraluminal vesicles (ILVs) that are generated by invagination and scission from the limiting membrane of the endosome and mostly are delivered to lysosomes enabling degradation of membrane proteins, such as stimulated growth factor receptors, lysosomal enzymes and lipids. The MVB pathway appears to require the sequential function of ESCRT-O, -I,-II and -III complexes. ESCRT-III proteins mostly dissociate from the invaginating membrane before the ILV is released. The ESCRT machinery also functions in topologically equivalent membrane fission events, such as the terminal stages of cytokinesis and the budding of enveloped viruses (HIV-1 and other lentiviruses). ESCRT-III proteins are believed to mediate the necessary vesicle extrusion and/or membrane fission activities, possibly in conjunction with the AAA ATPase VPS4. Involved in HIV-1 p6- and p9-dependent virus release. This is Charged multivesicular body protein 5 (CHMP5) from Homo sapiens (Human).